A 61-amino-acid polypeptide reads, in one-letter code: Small ribosomal subunit protein uS14 (61 aa).

Zn(2+)-binding residues include Cys-24, Cys-27, Cys-40, and Cys-43.

The protein belongs to the universal ribosomal protein uS14 family. Zinc-binding uS14 subfamily. As to quaternary structure, part of the 30S ribosomal subunit. Contacts proteins S3 and S10. Requires Zn(2+) as cofactor.

Functionally, binds 16S rRNA, required for the assembly of 30S particles and may also be responsible for determining the conformation of the 16S rRNA at the A site. This Syntrophus aciditrophicus (strain SB) protein is Small ribosomal subunit protein uS14.